Reading from the N-terminus, the 507-residue chain is NAD(P)H-quinone oxidoreductase chain 4, chloroplastic (507 aa).

15 consecutive transmembrane segments (helical) span residues 4–24 (FPWLTIIVVFPILTGSLIFLL), 37–57 (LCICILELLLTTYTFCYHFQL), 87–107 (IGPILLTGFITTLATLAAWPV), 111–131 (AQLFHFLMLAMYSGQIGSFSS), 134–154 (LLLFFLMWEFELIPVYLLLSM), 167–187 (FILYTAGGSIFLLIGVLGIGL), 208–228 (ALEVIFYVGFLIAFAVKLPII), 242–262 (HYSTCMLLAGILLKMGAYGLV), 272–292 (AHCLFSPGLIIVGAIQIIYAA), 305–325 (IAYSSISHMGFIIIGIGSLSD), 330–350 (GAILQIISHGFIGAALFFLAG), 386–406 (LALPGLSGFVAELLVFFGIIT), 416–436 (ILIAFLMAIGMILTPIYSLSM), 462–482 (LFVSISLLLPIIGIGIYPDFV), and 483–503 (LSLSVEKVEAIISHFFFSIVF).

This sequence belongs to the complex I subunit 4 family.

It is found in the plastid. The protein resides in the chloroplast thylakoid membrane. The enzyme catalyses a plastoquinone + NADH + (n+1) H(+)(in) = a plastoquinol + NAD(+) + n H(+)(out). The catalysed reaction is a plastoquinone + NADPH + (n+1) H(+)(in) = a plastoquinol + NADP(+) + n H(+)(out). In Oenothera elata subsp. hookeri (Hooker's evening primrose), this protein is NAD(P)H-quinone oxidoreductase chain 4, chloroplastic (ndhD).